The primary structure comprises 344 residues: Acetylpolyamine amidohydrolase 2 (344 aa).

H159 serves as the catalytic Proton donor/acceptor. D195, H197, and D284 together coordinate Zn(2+).

Belongs to the histone deacetylase family. Homodimer. The cofactor is Zn(2+).

It catalyses the reaction N-acetylputrescine + H2O = putrescine + acetate. It carries out the reaction N-acetylcadaverine + H2O = cadaverine + acetate. It functions in the pathway amine and polyamine metabolism. Functionally, catalyzes the deacetylation of acetylated polyamines such as N-acetylputrescine and N-acetylcadaverine. Plays an important role in the metabolism of acetylated polyamines in P.aeruginosa. Is involved in the degradation pathways of N-acetylputrescine and N-acetylcadaverine, that allow P.aeruginosa to utilize these acetylpolyamines as a carbon source under glucose starvation. Shows nearly no activity against N(1)-acetylspermine and N(1)-acetylspermidine. Can also hydrolyze artificial trifluoroacetylated lysine-derivative, and to a lesser extent, acetylated lysine-derivative. This chain is Acetylpolyamine amidohydrolase 2, found in Pseudomonas aeruginosa (strain ATCC 15692 / DSM 22644 / CIP 104116 / JCM 14847 / LMG 12228 / 1C / PRS 101 / PAO1).